Consider the following 347-residue polypeptide: Gibberellin 3-beta-dioxygenase 2 (347 aa).

The Fe2OG dioxygenase domain maps to 197–301 (DFQGTQAVIQ…RFSMAYLWGP (105 aa)). 3 residues coordinate Fe cation: His225, Asp227, and His282. Arg292 is a catalytic residue. Arg292 provides a ligand contact to 2-oxoglutarate.

Belongs to the iron/ascorbate-dependent oxidoreductase family. GA3OX subfamily. The cofactor is L-ascorbate. It depends on Fe(2+) as a cofactor. As to expression, highly expressed in seedlings but also expressed in roots, leaves, stems, flowers, siliques and seeds. Detected predominantly in the hypocotyl and roots of young seedlings and in the petioles and vasculature of leaves. Not expressed in the shoot apical meristem, but found in the elongation zone, the quiescent center cells and the columella cells of the root tips. Found in the cortex and the endodermis of the embryo axis in germinating seeds.

The enzyme catalyses gibberellin A20 + 2-oxoglutarate + O2 = gibberellin A1 + succinate + CO2. Its pathway is plant hormone biosynthesis; gibberellin biosynthesis. Functionally, converts the inactive gibberellin (GA) precursors GA9 and GA20 in the bioactives gibberellins GA4 and GA1. Involved in the production of bioactive GA for vegetative growth and development. The polypeptide is Gibberellin 3-beta-dioxygenase 2 (Arabidopsis thaliana (Mouse-ear cress)).